Here is a 159-residue protein sequence, read N- to C-terminus: NADH-quinone oxidoreductase subunit B (159 aa).

Positions 32, 33, 97, and 126 each coordinate [4Fe-4S] cluster.

This sequence belongs to the complex I 20 kDa subunit family. In terms of assembly, NDH-1 is composed of 14 different subunits. Subunits NuoB, C, D, E, F, and G constitute the peripheral sector of the complex. The cofactor is [4Fe-4S] cluster.

Its subcellular location is the cell inner membrane. The catalysed reaction is a quinone + NADH + 5 H(+)(in) = a quinol + NAD(+) + 4 H(+)(out). NDH-1 shuttles electrons from NADH, via FMN and iron-sulfur (Fe-S) centers, to quinones in the respiratory chain. The immediate electron acceptor for the enzyme in this species is believed to be ubiquinone. Couples the redox reaction to proton translocation (for every two electrons transferred, four hydrogen ions are translocated across the cytoplasmic membrane), and thus conserves the redox energy in a proton gradient. The polypeptide is NADH-quinone oxidoreductase subunit B (Helicobacter acinonychis (strain Sheeba)).